The following is a 599-amino-acid chain: Proline--tRNA ligase (599 aa).

This sequence belongs to the class-II aminoacyl-tRNA synthetase family. ProS type 1 subfamily. As to quaternary structure, homodimer.

It is found in the cytoplasm. The enzyme catalyses tRNA(Pro) + L-proline + ATP = L-prolyl-tRNA(Pro) + AMP + diphosphate. In terms of biological role, catalyzes the attachment of proline to tRNA(Pro) in a two-step reaction: proline is first activated by ATP to form Pro-AMP and then transferred to the acceptor end of tRNA(Pro). As ProRS can inadvertently accommodate and process non-cognate amino acids such as alanine and cysteine, to avoid such errors it has two additional distinct editing activities against alanine. One activity is designated as 'pretransfer' editing and involves the tRNA(Pro)-independent hydrolysis of activated Ala-AMP. The other activity is designated 'posttransfer' editing and involves deacylation of mischarged Ala-tRNA(Pro). The misacylated Cys-tRNA(Pro) is not edited by ProRS. The chain is Proline--tRNA ligase from Prochlorococcus marinus (strain MIT 9313).